The following is a 157-amino-acid chain: Mediator of RNA polymerase II transcription subunit 22 (157 aa).

It belongs to the Mediator complex subunit 22 family. As to quaternary structure, component of the Mediator complex.

The protein resides in the nucleus. Its function is as follows. Component of the Mediator complex, a coactivator involved in the regulated transcription of nearly all RNA polymerase II-dependent genes. Mediator functions as a bridge to convey information from gene-specific regulatory proteins to the basal RNA polymerase II transcription machinery. Mediator is recruited to promoters by direct interactions with regulatory proteins and serves as a scaffold for the assembly of a functional preinitiation complex with RNA polymerase II and the general transcription factors. This is Mediator of RNA polymerase II transcription subunit 22 (mdt-22) from Caenorhabditis elegans.